Here is a 556-residue protein sequence, read N- to C-terminus: MEDLKPRPASSSPLTPLGFLERAATVYGDCTSVVYDAVSYTWSQTHRRCLCLASSIASLGIENGHVVSVLAPNVPQMYELHFAVPMAGAILNAVNLRLDARTISILLHHSESKLIFVDHLSRDLILEAIALFPKQAPVPRLVFMADESESGNSSELGKEFFCSYKDLIDRGDPDFKWVMPKSEWDPMILNYTSGTTSSPKGVVHCHRGIFIMTVDSLIDWGVPKQPVYLWTLPMFHANGWSYPWGMAAVGGTNICLRKFDSEIIYDMIKRHGVTHMCGAPVVLNMLSNAPGSEPLKTTVQIMTAGAPPPSAVLFRTESLGFAVSHGYGLTETAGLVVSCAWKKEWNHLPATERARLKSRQGVGTVMQTKIDVVDPVTGAAVKRDGSTLGEVVLRGGSVMLGYLKDPEGTAKSMTADGWFYTGDVGVMHPDGYLEIKDRSKDVIISGGENLSSVEVESILYSHPDILEAAVVARPDEFWGETPCAFVSLKKGLTKKPTEKEIVEYCRSKLPRYMVPKTVVFKEELPKTSTGKVQKFILRDMARGMGSATAGASRSRM.

ATP is bound by residues 192-200, 325-330, D423, 435-438, and K531; these read TSGTTSSPK, HGYGLT, and IKDR. The tract at residues 260 to 325 is SBD1; the sequence is DSEIIYDMIK…TESLGFAVSH (66 aa). The SBD2 stretch occupies residues 326–402; sequence GYGLTETAGL…LRGGSVMLGY (77 aa).

This sequence belongs to the ATP-dependent AMP-binding enzyme family. Mostly expressed in old leaves and in cones and glandular trichomes (lupulin glands) after flowering, and, to a lower extent, in stems, young leaves and flowers.

It is found in the cytoplasm. The protein resides in the cytosol. The catalysed reaction is 2-methylpropanoate + ATP + CoA = 2-methylpropanoyl-CoA + AMP + diphosphate. It carries out the reaction propanoate + ATP + CoA = propanoyl-CoA + AMP + diphosphate. The enzyme catalyses butanoate + ATP + CoA = butanoyl-CoA + AMP + diphosphate. It catalyses the reaction 2-methylbutanoate + ATP + CoA = 2-methylbutanoyl-CoA + AMP + diphosphate. It functions in the pathway secondary metabolite biosynthesis. Involved in the biosynthesis of prenylated phenolics natural products which contribute to the bitter taste of beer and display broad biological activities. Catalyzes the ligation of CoA on 2-methylpropanoate (isobutyric acid) and 2-methylbutanoate to produce 2-methylpropanoyl-CoA and 2-methylbutanoyl-CoA, respectively. Can also use propanoate and butanoate as substrates with a lower efficiency. The protein is 2-methylpropanoate--CoA ligase CCL4 of Humulus lupulus (European hop).